A 926-amino-acid chain; its full sequence is ABC transporter A family member 6 (926 aa).

Transmembrane regions (helical) follow at residues 34-54, 336-356, 389-409, 418-438, 451-471, and 525-545; these read LIVI…VFDS, ASLI…PVIL, FLAI…AIGL, TIQF…AFLV, VAYI…QFLI, and DEVF…TYYI. Residues 610–847 form the ABC transporter domain; it reads IVCDNLKKVY…YGGSYVLTIT (238 aa). 648–655 lines the ATP pocket; sequence GPNGAGKT.

The protein belongs to the ABC transporter superfamily. ABCA family. CPR flippase (TC 3.A.1.211) subfamily.

The protein localises to the membrane. The sequence is that of ABC transporter A family member 6 (ABCA6) from Arabidopsis thaliana (Mouse-ear cress).